A 187-amino-acid chain; its full sequence is MLALRPEHHDSITLRIEAEPAAEAEDADDALAGAEMLTLDLTVQHGDALKAAARKALPKQKDIEAWIAPALFADAQLNVRFVDEEEGRTLNHTYRGKDYATNVLTFSYAETEDDPVAADIVLCCPVVEQEAKDQGKPLRAHYAHLIVHGALHAQGYDHEDPAQAEEMEGIETEVLAGLGFPDPYADR.

Zn(2+) is bound by residues H148, H152, and H158.

This sequence belongs to the endoribonuclease YbeY family. Zn(2+) serves as cofactor.

The protein resides in the cytoplasm. In terms of biological role, single strand-specific metallo-endoribonuclease involved in late-stage 70S ribosome quality control and in maturation of the 3' terminus of the 16S rRNA. The protein is Endoribonuclease YbeY of Ralstonia nicotianae (strain ATCC BAA-1114 / GMI1000) (Ralstonia solanacearum).